Here is a 953-residue protein sequence, read N- to C-terminus: Leucine-rich repeat receptor protein kinase HPCA1 (953 aa).

The first 23 residues, 1–23, serve as a signal peptide directing secretion; the sequence is MSSRTGASLLLILFFFQICSVSA. The Extracellular portion of the chain corresponds to 24 to 558; sequence LTNGLDASAL…EVSSKSSNKS (535 aa). LRR repeat units follow at residues 64-88, 89-113, 115-137, 138-162, 164-187, and 192-216; these read NDRV…ISFL, SELR…IGNL, KLRN…IGTL, KELI…GLLS, LYWF…TSAP, and LLQT…LFSS. Asparagine 182 carries an N-linked (GlcNAc...) asparagine glycan. Asparagine 217 carries an N-linked (GlcNAc...) asparagine glycan. LRR repeat units lie at residues 218–241, 242–265, 266–290, 292–311, 313–337, 339–361, and 362–384; these read MSLI…LSLV, KTLT…LNNL, TNLN…SLTS, YTLD…SWIS, LPSL…FFSP, QLQT…TDVS, and SQLE…ANKV. N-linked (GlcNAc...) asparagine glycosylation is found at asparagine 264, asparagine 284, and asparagine 298. The N-linked (GlcNAc...) asparagine glycan is linked to asparagine 411. 2 disulfide bridges follow: cysteine 421/cysteine 424 and cysteine 434/cysteine 436. N-linked (GlcNAc...) asparagine glycosylation is found at asparagine 456, asparagine 459, asparagine 510, and asparagine 523. Residues 559-579 traverse the membrane as a helical segment; that stretch reads ILIGAVVGVVVLLLLLTIAGI. Residues 580 to 953 lie on the Cytoplasmic side of the membrane; the sequence is YALRQKKRAE…NFPASKLEPQ (374 aa). Serine 606 and serine 607 each carry phosphoserine. Residues 631 to 905 form the Protein kinase domain; sequence FSEANDVGGG…EVVKEIENIM (275 aa). Residues 637–645 and lysine 659 contribute to the ATP site; that span reads VGGGGYGKV. The active-site Proton acceptor is aspartate 755. A phosphothreonine mark is found at threonine 786, threonine 789, and threonine 790. Polar residues predominate over residues 912-921; the sequence is PNSDSATSSR. The tract at residues 912-953 is disordered; that stretch reads PNSDSATSSRTYEDAIKGSGDPYGSESFQYSGNFPASKLEPQ. Phosphoserine is present on serine 942.

Belongs to the protein kinase superfamily. Ser/Thr protein kinase family. Post-translationally, autophosphorylated at Ser-606, Ser-607, Thr-786, Thr-789, Thr-790 and Ser-942 in response to extracellular hydrogen peroxide. As to expression, widely expressed.

It is found in the cell membrane. It carries out the reaction L-seryl-[protein] + ATP = O-phospho-L-seryl-[protein] + ADP + H(+). It catalyses the reaction L-threonyl-[protein] + ATP = O-phospho-L-threonyl-[protein] + ADP + H(+). With respect to regulation, activated by autophosphorylation on serine and threonine residues in response to extracellular hydrogen peroxide. Functionally, leucine-rich repeat receptor protein kinase that acts as sensor of extracellular hydrogen peroxide. Required for intracellular calcium influx in response to extracellular hydrogen peroxide. Mediates hydrogen peroxide-induced activation of calcium channels in guard cells and is required for stomatal closure. The chain is Leucine-rich repeat receptor protein kinase HPCA1 from Arabidopsis thaliana (Mouse-ear cress).